A 972-amino-acid polypeptide reads, in one-letter code: Microtubule-associated protein 1S (972 aa).

The segment at 1–715 is necessary for the microtubule-organizing center localization; that stretch reads MAAVMAAPEP…SESLPTLSDS (715 aa). The segment covering 454–469 has biased composition (polar residues); sequence LEVPSRANSQDSLASR. Residues 454–632 form a disordered region; that stretch reads LEVPSRANSQ…PHSTEVDESL (179 aa). Ser-462 carries the phosphoserine modification. Over residues 489–505 the composition is skewed to basic and acidic residues; sequence VRREPALATRDQKKDTK. 2 stretches are compositionally biased toward pro residues: residues 537–550 and 564–581; these read APVP…PAPE and PPAP…PPTA. Residues Ser-585, Ser-590, and Ser-592 each carry the phosphoserine modification. The segment at 600-972 is necessary for interaction with RASSF1; it reads PDASPSATTP…EAFPACKVEF (373 aa). Over residues 602–620 the composition is skewed to low complexity; it reads ASPSATTPTLTTPSLPAEL. A necessary for association with microtubules region spans residues 644–879; that stretch reads DAGLSLPLRL…GGGAGHLDQN (236 aa). A phosphoserine mark is found at Ser-659 and Ser-683. Residues 671–854 are disordered; sequence CEFSHRKPPP…SSGPSSRPAP (184 aa). Over residues 702–721 the composition is skewed to low complexity; that stretch reads PTSVSESLPTLSDSDPVPVA. Position 723 is a phosphoserine (Ser-723). Positions 737 to 748 are enriched in pro residues; the sequence is LPTPRVPPPLPD. Low complexity predominate over residues 781–800; that stretch reads ARPSSASAAPRAATVAAKTK. The necessary for association with actin stretch occupies residues 874–972; that stretch reads GHLDQNFFLR…EAFPACKVEF (99 aa). The interval 880 to 904 is necessary for the mitochondrial aggregation and genome destruction; the sequence is FFLRVRALCYVISGQGQRQEEGLRG.

It belongs to the MAP1A/MAP1B/MAP1S family. Heterodimer of a heavy and a light chain. Interacts with microtubules and actin. Both MAP1S heavy and light chains interact with microtubules. MAP1S light chain interacts with actin. Interacts with LRPPRC, RASSF1, microtubules and VCY2. Interacts (via C-terminus) with GAN (via Kelch domains). Interacts with WDR47 (via N-terminus of light chain). Interacts with ESR1. In terms of tissue distribution, expressed in cortex cerebellum, dorsal root ganglia, frontal cortex, hippocampus, hypothalamus, mesencephalon, medulla oblongata, occipital cortex, pons, spinal cord, striatum of the brain, neurons, heart, testis and skeletal muscle (at protein level).

The protein localises to the nucleus. It localises to the cytoplasm. Its subcellular location is the cytosol. The protein resides in the cytoskeleton. It is found in the spindle. Its function is as follows. Microtubule-associated protein that mediates aggregation of mitochondria resulting in cell death and genomic destruction (MAGD). Plays a role in anchoring the microtubule organizing center to the centrosomes. Binds to DNA. Plays a role in apoptosis. Involved in the formation of microtubule bundles. In Rattus norvegicus (Rat), this protein is Microtubule-associated protein 1S (Map1s).